The sequence spans 316 residues: Na(+)-translocating NADH-quinone reductase subunit C (316 aa).

A helical transmembrane segment spans residues 13–33 (WYIILFIFVLSLIAGTLLSSV). Thr280 bears the FMN phosphoryl threonine mark.

This sequence belongs to the NqrC family. Composed of six subunits; NqrA, NqrB, NqrC, NqrD, NqrE and NqrF. The cofactor is FMN.

It localises to the cell inner membrane. The catalysed reaction is a ubiquinone + n Na(+)(in) + NADH + H(+) = a ubiquinol + n Na(+)(out) + NAD(+). Its function is as follows. NQR complex catalyzes the reduction of ubiquinone-1 to ubiquinol by two successive reactions, coupled with the transport of Na(+) ions from the cytoplasm to the periplasm. NqrA to NqrE are probably involved in the second step, the conversion of ubisemiquinone to ubiquinol. In Chlamydia trachomatis serovar D (strain ATCC VR-885 / DSM 19411 / UW-3/Cx), this protein is Na(+)-translocating NADH-quinone reductase subunit C.